A 104-amino-acid polypeptide reads, in one-letter code: MAIIPDKQDNTVLERQEQKLKPPAMFKVVLLNDDFTPMEFVVMIVQEYFNKDRETATQIMLKVHREGRGVCGVYTRDIASTKVEQVVTHARQAGHPLQCVMEEA.

The protein belongs to the ClpS family. As to quaternary structure, binds to the N-terminal domain of the chaperone ClpA.

Functionally, involved in the modulation of the specificity of the ClpAP-mediated ATP-dependent protein degradation. In Paraburkholderia phymatum (strain DSM 17167 / CIP 108236 / LMG 21445 / STM815) (Burkholderia phymatum), this protein is ATP-dependent Clp protease adapter protein ClpS.